We begin with the raw amino-acid sequence, 1107 residues long: Protein translocase subunit SecA (1107 aa).

Residues glutamine 169, 187-191 (GEGKT), and aspartate 688 each bind ATP. Positions 1036-1066 (RHAAEQRTDMSKYRTQKDDIEAQQKAQRDAA) are enriched in basic and acidic residues. A disordered region spans residues 1036-1107 (RHAAEQRTDM…KFKQCHGRNL (72 aa)). Zn(2+) contacts are provided by cysteine 1091, cysteine 1093, cysteine 1102, and histidine 1103. Residues 1097–1107 (KKFKQCHGRNL) are compositionally biased toward basic residues.

This sequence belongs to the SecA family. Monomer and homodimer. Part of the essential Sec protein translocation apparatus which comprises SecA, SecYEG and auxiliary proteins SecDF. Other proteins may also be involved. Zn(2+) serves as cofactor.

Its subcellular location is the cell inner membrane. It is found in the cytoplasm. The enzyme catalyses ATP + H2O + cellular proteinSide 1 = ADP + phosphate + cellular proteinSide 2.. Its function is as follows. Part of the Sec protein translocase complex. Interacts with the SecYEG preprotein conducting channel. Has a central role in coupling the hydrolysis of ATP to the transfer of proteins into and across the cell membrane, serving as an ATP-driven molecular motor driving the stepwise translocation of polypeptide chains across the membrane. In Porphyromonas gingivalis (strain ATCC BAA-308 / W83), this protein is Protein translocase subunit SecA.